The chain runs to 548 residues: MAAKDVKFGNDARVKMLRGVNVLADAVKVTLGPKGRNVVLDKSFGAPTITKDGVSVAREIELEDKFENMGAQMVKEVASKANDAAGDGTTTATVLAQAIITEGLKAVAAGMNPMDLKRGIDKAVIAAVEELKALSVPCSDSKAIAQVGTISANSDETVGKMIAEAMDKVGKEGVITVEEGTGLQDELDVVEGMQFDRGYLSPYFINKPETGAVELESPFILLADKKISNIREMLPVLEAVAKAGKPLVIVAEDVEGEALATLVVNTMRGIVKVAAVKAPGFGDRRKAMLQDIATLTGGTVISEEIGLELEKATLEDLGQAKRVVINKDTTTIIDGTGEEAAIQGRVAQIRQQVEEATSDYDREKLQERVAKLAGGVAVIKVGAATEVEMKEKKARVEDALAATRAAVEEGVVAGGGVALVRVAAKLASLTAQNEDQNVGIKVALRAMEAPLRQIVSNAGEEPSVVANTVKAGEGNYGYNAATEEYGNMIDFGILDPTKVTRSALQYAASVAGLMITTECMVTDLPKSDAPDLGAAGGMGGMGGMGGMM.

Residues 30–33 (TLGP), lysine 51, 87–91 (DGTTT), glycine 415, 479–481 (NAA), and aspartate 495 each bind ATP.

It belongs to the chaperonin (HSP60) family. Forms a cylinder of 14 subunits composed of two heptameric rings stacked back-to-back. Interacts with the co-chaperonin GroES.

The protein localises to the cytoplasm. The enzyme catalyses ATP + H2O + a folded polypeptide = ADP + phosphate + an unfolded polypeptide.. Together with its co-chaperonin GroES, plays an essential role in assisting protein folding. The GroEL-GroES system forms a nano-cage that allows encapsulation of the non-native substrate proteins and provides a physical environment optimized to promote and accelerate protein folding. The protein is Chaperonin GroEL of Pectobacterium carotovorum subsp. carotovorum (strain PC1).